Consider the following 462-residue polypeptide: uncharacterized protein (462 aa).

2 consecutive transmembrane segments (helical) span residues 381-401 (WILG…FKGM) and 433-453 (LWIL…NLYI).

It is found in the cell membrane. This is an uncharacterized protein from Methanocaldococcus jannaschii (strain ATCC 43067 / DSM 2661 / JAL-1 / JCM 10045 / NBRC 100440) (Methanococcus jannaschii).